A 179-amino-acid chain; its full sequence is Large ribosomal subunit protein uL6 (179 aa).

This sequence belongs to the universal ribosomal protein uL6 family. As to quaternary structure, part of the 50S ribosomal subunit.

Its function is as follows. This protein binds to the 23S rRNA, and is important in its secondary structure. It is located near the subunit interface in the base of the L7/L12 stalk, and near the tRNA binding site of the peptidyltransferase center. This Prochlorococcus marinus (strain NATL2A) protein is Large ribosomal subunit protein uL6.